A 260-amino-acid polypeptide reads, in one-letter code: MLDIGVNLTNGQFSGDVPQVVARARQAGLNGMIITGTNLTESAQALHLAQAYPDFCWATAGVHPHDAHRWNENSAADLEPLLRSPAVVAVGECGLDFARNFSTPAQQEAAFEAQLALAAQIGKPVFLHCREAHARFIALLRPWLSRLPGAVLHCFTGTRDELDACLSLGLYIGITGWICDERRGMPLRALLPHIPAERLLLETDAPYLLPRDIQPKPKSRRNEPCFLPHIAEQAARWRQQDANWLKQVTENNARQLFRLA.

Positions 92, 128, and 153 each coordinate a divalent metal cation.

This sequence belongs to the metallo-dependent hydrolases superfamily. TatD-type hydrolase family. TatD subfamily. As to quaternary structure, monomer. It depends on Mg(2+) as a cofactor.

It localises to the cytoplasm. Functionally, 3'-5' exonuclease that prefers single-stranded DNA and RNA. May play a role in the H(2)O(2)-induced DNA damage repair. The protein is 3'-5' ssDNA/RNA exonuclease TatD of Edwardsiella piscicida.